The primary structure comprises 843 residues: Histone-lysine N-methyltransferase PRDM9 (843 aa).

Positions 23-86 constitute a KRAB-related domain; that stretch reads KVKDEFKDIS…QRQAMKPQIN (64 aa). Disordered regions lie at residues 85–104 and 110–170; these read INDS…VSPP and VKHS…KKLK. Cysteine 205, cysteine 208, cysteine 216, and histidine 219 together coordinate Zn(2+). Positions 244 to 358 constitute an SET domain; the sequence is PGLRISPSGI…PGCELLVWYG (115 aa). Residues 256 to 258, tyrosine 291, and 320 to 321 each bind S-adenosyl-L-methionine; these read AGL and NC. 288–294 contacts substrate; it reads NSGYSWL. Residue tyrosine 357 coordinates substrate. Lysine 368 bears the N6,N6,N6-trimethyllysine; alternate mark. Lysine 368 bears the N6-methyllysine; alternate mark. An N6-methyllysine mark is found at lysine 372 and lysine 374. A C2H2-type 1 zinc finger spans residues 388–411; that stretch reads HPCLLCSLAFSSQKFLTQHMEWNH. The Zn(2+) site is built by cysteine 390, cysteine 393, histidine 406, and histidine 411. The interval 418–493 is disordered; the sequence is GTSARINPKP…VEELRTGQTT (76 aa). Basic and acidic residues predominate over residues 436–454; sequence QEQHVDSQNKNDKASNEVK. Residues 462 to 472 are compositionally biased toward polar residues; sequence RISTTFPSTLK. A compositionally biased stretch (basic and acidic residues) spans 473–488; that stretch reads EQMRSEESKRTVEELR. The C2H2-type 2; degenerate zinc finger occupies 513 to 531; the sequence is QCGQYFSDKSNVNEHQKTH. C2H2-type zinc fingers lie at residues 537–559, 565–587, 593–615, 621–643, 649–671, 677–699, 705–727, 733–755, 761–783, 789–811, and 817–839; these read YVCR…QRTH. Zn(2+)-binding residues include cysteine 707, cysteine 710, histidine 723, histidine 727, cysteine 735, cysteine 738, histidine 751, histidine 755, cysteine 763, cysteine 766, histidine 779, histidine 783, cysteine 791, cysteine 794, histidine 807, and histidine 811. Positions 715-805 are DNA-binding; sequence TAKSNLIQHQ…RGFTQKSNLI (91 aa).

The protein belongs to the class V-like SAM-binding methyltransferase superfamily. As to quaternary structure, homodimer. Interacts with EHMT2 and CDYL; interaction only takes place when PRDM9 is bound to hotspot DNA. Interacts with CXXC1; this interaction does not link PRDM9-activated recombination hotspot sites with DSB machinery and is not required for the hotspot recognition pathway. Forms a complex with EWSR1, REC8, SYCP3 and SYCP1; complex formation is dependent of phosphorylated form of REC8 and requires PRDM9 bound to hotspot DNA; EWSR1 joins PRDM9 with the chromosomal axis through REC8. Post-translationally, mono-methylated; automethylated. Tri-methylated; automethylated. Mono-methylation is predominant; automethylation is lower and slower than H3 peptide methylation and is in a highest S-adenosyl-L-methionine concentration-dependent. There are two major sites for automethylation at Lys-368 and Lys-374. Lysines can be simultaneously methylated, such as Lys-368(me3)/Lys-372(me1), Lys-368(me1)/Lys-374(me1) and Lys-368(me1)/Lys-372(me1)/Lys-374(me1). Automethylation is an intramolecular (cis) process. Specifically expressed in germ cells entering meiotic prophase in female fetal gonads and in postnatal testis. Expressed in early meiotic prophase.

The protein localises to the nucleus. It localises to the chromosome. It catalyses the reaction L-lysyl-[protein] + S-adenosyl-L-methionine = N(6)-methyl-L-lysyl-[protein] + S-adenosyl-L-homocysteine + H(+). The catalysed reaction is N(6),N(6)-dimethyl-L-lysyl-[protein] + S-adenosyl-L-methionine = N(6),N(6),N(6)-trimethyl-L-lysyl-[protein] + S-adenosyl-L-homocysteine + H(+). The enzyme catalyses L-lysyl(4)-[histone H3] + 3 S-adenosyl-L-methionine = N(6),N(6),N(6)-trimethyl-L-lysyl(4)-[histone H3] + 3 S-adenosyl-L-homocysteine + 3 H(+). It carries out the reaction L-lysyl(36)-[histone H3] + 3 S-adenosyl-L-methionine = N(6),N(6),N(6)-trimethyl-L-lysyl(36)-[histone H3] + 3 S-adenosyl-L-homocysteine + 3 H(+). It catalyses the reaction L-lysyl(9)-[histone H3] + 3 S-adenosyl-L-methionine = N(6),N(6),N(6)-trimethyl-L-lysyl(9)-[histone H3] + 3 S-adenosyl-L-homocysteine + 3 H(+). The catalysed reaction is L-lysyl(20)-[histone H4] + S-adenosyl-L-methionine = N(6)-methyl-L-lysyl(20)-[histone H4] + S-adenosyl-L-homocysteine + H(+). The enzyme catalyses N(6)-methyl-L-lysyl(20)-[histone H4] + S-adenosyl-L-methionine = N(6),N(6)-dimethyl-L-lysyl(20)-[histone H4] + S-adenosyl-L-homocysteine + H(+). Histone methyltransferase that sequentially mono-, di-, and tri-methylates both 'Lys-4' (H3K4) and 'Lys-36' (H3K36) of histone H3 to produce respectively trimethylated 'Lys-4' (H3K4me3) and trimethylated 'Lys-36' (H3K36me3) histone H3 and plays a key role in meiotic prophase by determining hotspot localization thereby promoting meiotic recombination. Can also methylate all four core histones with H3 being the best substrate and the most highly modified. Is also able, on one hand, to mono and di-methylate H4K20 and on other hand to trimethylate H3K9 with the di-methylated H3K9 as the best substrate. During meiotic prophase, binds specific DNA sequences through its zinc finger domains thereby determining hotspot localization where it promotes local H3K4me3 and H3K36me3 enrichment on the same nucleosomes through its histone methyltransferase activity. Thereby promotes double-stranded breaks (DSB) formation, at this subset of PRDM9-binding sites, that initiates meiotic recombination for the proper meiotic progression. During meiotic progression hotspot-bound PRDM9 interacts with several complexes; in early leptonema binds CDYL and EHMT2 followed by EWSR1 and CXXC1 by the end of leptonema. EWSR1 joins PRDM9 with the chromosomal axis through REC8. In this way, controls the DSB repair pathway, pairing of homologous chromosomes and sex body formation. Moreover plays a central role in the transcriptional activation of genes during early meiotic prophase thanks to H3K4me3 and H3K36me3 enrichment that represents a specific tag for epigenetic transcriptional activation. In addition performs automethylation. Acetylation and phosphorylation of histone H3 attenuate or prevent histone H3 methylation. The sequence is that of Histone-lysine N-methyltransferase PRDM9 from Mus musculus (Mouse).